Consider the following 458-residue polypeptide: Phosphoglucosamine mutase (458 aa).

S102 functions as the Phosphoserine intermediate in the catalytic mechanism. 4 residues coordinate Mg(2+): S102, D252, D254, and D256. At S102 the chain carries Phosphoserine.

Belongs to the phosphohexose mutase family. Requires Mg(2+) as cofactor. In terms of processing, activated by phosphorylation.

It carries out the reaction alpha-D-glucosamine 1-phosphate = D-glucosamine 6-phosphate. Its function is as follows. Catalyzes the conversion of glucosamine-6-phosphate to glucosamine-1-phosphate. This Anaeromyxobacter dehalogenans (strain 2CP-C) protein is Phosphoglucosamine mutase.